Consider the following 463-residue polypeptide: Putative ankyrin repeat protein R579 (463 aa).

8 ANK repeats span residues 124-154, 156-181, 242-271, 273-299, 300-328, 329-355, 356-385, and 387-416; these read LKTDLMFYAVSKNVSIDVINFLIDMDCKCTI, SITRAIAEKKLDIAKIIIDHNPSENI, KEKNISSYVIQSNSLNVVKTFVEHGLQFNP, IYLWVNGNSESENIVRYIIELGIDYRP, HIDRLLKICITSGTFSHLEYLINLGVSQE, NINEAFLTAVSEDKFELIKYLIYMGAD, INYKNTIAASYTDNIDVLKYLIEKGADITT, and GSNDVINHAIGSHQSDFCRCLLENGATITL.

This chain is Putative ankyrin repeat protein R579, found in Acanthamoeba polyphaga (Amoeba).